We begin with the raw amino-acid sequence, 433 residues long: Signal recognition particle 54 kDa protein (433 aa).

Residues 100 to 107 (GLQGSGKT), 180 to 184 (DTAGR), and 238 to 241 (TKFD) each bind GTP.

It belongs to the GTP-binding SRP family. SRP54 subfamily. In terms of assembly, part of the signal recognition particle protein translocation system, which is composed of SRP and FtsY. Archaeal SRP consists of a 7S RNA molecule of 300 nucleotides and two protein subunits: SRP54 and SRP19.

It is found in the cytoplasm. The enzyme catalyses GTP + H2O = GDP + phosphate + H(+). In terms of biological role, involved in targeting and insertion of nascent membrane proteins into the cytoplasmic membrane. Binds to the hydrophobic signal sequence of the ribosome-nascent chain (RNC) as it emerges from the ribosomes. The SRP-RNC complex is then targeted to the cytoplasmic membrane where it interacts with the SRP receptor FtsY. The polypeptide is Signal recognition particle 54 kDa protein (Archaeoglobus fulgidus (strain ATCC 49558 / DSM 4304 / JCM 9628 / NBRC 100126 / VC-16)).